A 351-amino-acid polypeptide reads, in one-letter code: Prohormone-2 (351 aa).

A signal peptide spans 1 to 21 (MMCDWVWLLLTLCSLLMIVQS). 2 consecutive propeptides follow at residues 22-177 (LPTN…QTQV) and 192-319 (ELDI…MISR). The span at 51 to 69 (GNQQNHQPENNPSSSYSST) shows a compositional bias: polar residues. Disordered regions lie at residues 51–71 (GNQQ…STAE) and 136–176 (NEDR…VQTQ). A compositionally biased stretch (basic and acidic residues) spans 136-145 (NEDRRKRSEK). The span at 158 to 176 (PSTTSFQSPTSTQQSVQTQ) shows a compositional bias: low complexity.

The protein localises to the secreted. The polypeptide is Prohormone-2 (Apis mellifera (Honeybee)).